A 448-amino-acid chain; its full sequence is Methylenetetrahydrofolate--tRNA-(uracil-5-)-methyltransferase TrmFO (448 aa).

13 to 18 is an FAD binding site; the sequence is GAGLAG.

The protein belongs to the MnmG family. TrmFO subfamily. FAD is required as a cofactor.

The protein resides in the cytoplasm. The catalysed reaction is uridine(54) in tRNA + (6R)-5,10-methylene-5,6,7,8-tetrahydrofolate + NADH + H(+) = 5-methyluridine(54) in tRNA + (6S)-5,6,7,8-tetrahydrofolate + NAD(+). It carries out the reaction uridine(54) in tRNA + (6R)-5,10-methylene-5,6,7,8-tetrahydrofolate + NADPH + H(+) = 5-methyluridine(54) in tRNA + (6S)-5,6,7,8-tetrahydrofolate + NADP(+). Its function is as follows. Catalyzes the folate-dependent formation of 5-methyl-uridine at position 54 (M-5-U54) in all tRNAs. This Streptococcus pyogenes serotype M12 (strain MGAS2096) protein is Methylenetetrahydrofolate--tRNA-(uracil-5-)-methyltransferase TrmFO.